A 442-amino-acid polypeptide reads, in one-letter code: Putative mannan endo-1,6-alpha-mannosidase C1198.07c (442 aa).

An N-terminal signal peptide occupies residues Met-1–Ala-19. The Lumenal portion of the chain corresponds to Phe-20–Trp-421. Residues Asn-75, Asn-124, Asn-193, Asn-229, Asn-254, Asn-257, and Asn-356 are each glycosylated (N-linked (GlcNAc...) asparagine). The helical transmembrane segment at Ala-422–Phe-442 threads the bilayer.

It belongs to the glycosyl hydrolase 76 family.

It localises to the endoplasmic reticulum membrane. It carries out the reaction Random hydrolysis of (1-&gt;6)-alpha-D-mannosidic linkages in unbranched (1-&gt;6)-mannans.. In Schizosaccharomyces pombe (strain 972 / ATCC 24843) (Fission yeast), this protein is Putative mannan endo-1,6-alpha-mannosidase C1198.07c.